The primary structure comprises 1938 residues: Myosin-6 (1938 aa).

Positions 32 to 81 constitute a Myosin N-terminal SH3-like domain; sequence DIRTECFVPDDKEEYVKAKVVSREGGKVTAETENGKTVTIKEDQVMQQNP. In terms of domain architecture, Myosin motor spans 85–780; it reads DKIEDMAMLT…LLGLLEEMRD (696 aa). Lys-129 carries the post-translational modification N6,N6,N6-trimethyllysine. 178-185 is an ATP binding site; sequence GESGAGKT. The residue at position 379 (Thr-379) is a Phosphothreonine. Ser-417 is subject to Phosphoserine. 2 actin-binding regions span residues 657–679 and 759–773; these read LNKL…IPNE and KFGH…GLLG. The IQ domain maps to 783–812; it reads LSRIITRIQAQARGQLMRIEFKKIVERRDA. 2 calmodulin-binding regions span residues 790–807 and 816–833; these read IQAQ…KKIV and IQWN…PWMK. A coiled-coil region spans residues 842–1938; that stretch reads LKSAETEKEM…IGAKKMHDEE (1097 aa). Phosphoserine is present on residues Ser-1090 and Ser-1139. At Tyr-1261 the chain carries Phosphotyrosine. Ser-1271 carries the post-translational modification Phosphoserine. 2 positions are modified to phosphothreonine: Thr-1277 and Thr-1284. Ser-1309 bears the Phosphoserine mark. Phosphotyrosine is present on Tyr-1310. Residue Thr-1311 is modified to Phosphothreonine. Residue Ser-1512 is modified to Phosphoserine. Residue Thr-1515 is modified to Phosphothreonine. Positions 1909 to 1938 are disordered; it reads EERADIAESQVNKLRAKSRDIGAKKMHDEE. The segment covering 1925 to 1938 has biased composition (basic and acidic residues); sequence KSRDIGAKKMHDEE.

The protein belongs to the TRAFAC class myosin-kinesin ATPase superfamily. Myosin family. As to quaternary structure, muscle myosin is a hexameric protein that consists of 2 heavy chain subunits (MHC), 2 alkali light chain subunits (MLC) and 2 regulatory light chain subunits (MLC-2).

It localises to the cytoplasm. Its subcellular location is the myofibril. Functionally, muscle contraction. The sequence is that of Myosin-6 (Myh6) from Mus musculus (Mouse).